A 153-amino-acid chain; its full sequence is Nucleoside diphosphate kinase (153 aa).

Residues lysine 11, phenylalanine 59, arginine 87, threonine 93, arginine 104, and asparagine 114 each coordinate ATP. Residue histidine 117 is the Pros-phosphohistidine intermediate of the active site.

This sequence belongs to the NDK family. In terms of assembly, homotrimer. The cofactor is Mg(2+).

It catalyses the reaction a 2'-deoxyribonucleoside 5'-diphosphate + ATP = a 2'-deoxyribonucleoside 5'-triphosphate + ADP. It carries out the reaction a ribonucleoside 5'-diphosphate + ATP = a ribonucleoside 5'-triphosphate + ADP. Major role in the synthesis of nucleoside triphosphates other than ATP. The ATP gamma phosphate is transferred to the NDP beta phosphate via a ping-pong mechanism, using a phosphorylated active-site intermediate. This chain is Nucleoside diphosphate kinase (ndk1), found in Aspergillus fumigatus (strain ATCC MYA-4609 / CBS 101355 / FGSC A1100 / Af293) (Neosartorya fumigata).